Reading from the N-terminus, the 316-residue chain is MSVFTPLERSTLEAFLAPYDLGRLRDFRGIAEGSENSNFFVSLEHGEFVLTLVERGPVQDLPFFIELLDVLHEDGLPVPYALRTRDGEALRRLEGKPALLQPRLAGRHERQPNAHHCQEVGDLLGHLHAATRGRILERPSDRGLPWMLEQGANLAPRLPEQARALLAPALAEIAALDAERPALPRANLHADLFRDNVLFDGPHLAGLIDFYNACSGWMLYDLAITLNDWCSNADGSLDPARARALLAAYANRRPFTALEAEHWPSMLRVACVRFWLSRLIAAEAFAGQDVLIHDPAEFEMRLAQRQNVEIHLPFAL.

This sequence belongs to the pseudomonas-type ThrB family.

The catalysed reaction is L-homoserine + ATP = O-phospho-L-homoserine + ADP + H(+). The protein operates within amino-acid biosynthesis; L-threonine biosynthesis; L-threonine from L-aspartate: step 4/5. This Pseudomonas aeruginosa (strain UCBPP-PA14) protein is Homoserine kinase.